The following is a 98-amino-acid chain: Large ribosomal subunit protein bL27 (98 aa).

The propeptide occupies 1–10 (MELKMNLQLF). Positions 11-30 (AQKKGTGSSKNGRDSISKRL) are disordered.

It belongs to the bacterial ribosomal protein bL27 family. Post-translationally, the N-terminus is cleaved by ribosomal processing cysteine protease Prp.

The polypeptide is Large ribosomal subunit protein bL27 (Natranaerobius thermophilus (strain ATCC BAA-1301 / DSM 18059 / JW/NM-WN-LF)).